A 199-amino-acid polypeptide reads, in one-letter code: Recombination protein RecR (199 aa).

The C4-type zinc-finger motif lies at 58–73 (CSICCNITDTDPCSMC). Positions 81–176 (SVICVVEDPR…KVTRIAHGLP (96 aa)) constitute a Toprim domain.

Belongs to the RecR family.

In terms of biological role, may play a role in DNA repair. It seems to be involved in an RecBC-independent recombinational process of DNA repair. It may act with RecF and RecO. This chain is Recombination protein RecR, found in Clostridioides difficile (strain 630) (Peptoclostridium difficile).